The sequence spans 137 residues: Large ribosomal subunit protein eL28 (137 aa).

N-acetylserine is present on serine 2. Residues lysine 58 and lysine 65 each participate in a glycyl lysine isopeptide (Lys-Gly) (interchain with G-Cter in SUMO2) cross-link. A Phosphoserine modification is found at serine 115.

This sequence belongs to the eukaryotic ribosomal protein eL28 family. Component of the large ribosomal subunit.

It is found in the cytoplasm. Component of the large ribosomal subunit. The ribosome is a large ribonucleoprotein complex responsible for the synthesis of proteins in the cell. The sequence is that of Large ribosomal subunit protein eL28 (Rpl28) from Rattus norvegicus (Rat).